The primary structure comprises 1444 residues: Cleavage and polyadenylation specificity factor subunit 1 (1444 aa).

4 disordered regions span residues 406-439 (PPAS…SKSV), 549-571 (EETL…DDGR), 716-778 (GGVR…PAPF), and 902-924 (FREK…EGTG). Over residues 413 to 422 (EAADKEEPPS) the composition is skewed to basic and acidic residues. Phosphoserine occurs at positions 757 and 767. Residues 759–776 (SKEEARRSSQPPADRDPA) are compositionally biased toward basic and acidic residues. Residues 894 to 909 (KKVPHNINFREKKPKP) carry the Nuclear localization signal motif.

This sequence belongs to the CPSF1 family. As to quaternary structure, component of the cleavage and polyadenylation specificity factor (CPSF) complex, composed of CPSF1, CPSF2, CPSF3, CPSF4 and FIP1L1. Found in a complex with CPSF1, FIP1L1 and PAPOLA. Interacts with FIP1L1, TENT2/GLD2 and SRRM1. Interacts with TUT1; the interaction is direct and mediates the recruitment of the CPSF complex on the 3'UTR of selected pre-mRNAs. Post-translationally, the N-terminus is blocked.

The protein resides in the nucleus. The protein localises to the nucleoplasm. Its function is as follows. Component of the cleavage and polyadenylation specificity factor (CPSF) complex that plays a key role in pre-mRNA 3'-end formation, recognizing the AAUAAA signal sequence and interacting with poly(A) polymerase and other factors to bring about cleavage and poly(A) addition. This subunit is involved in the RNA recognition step of the polyadenylation reaction. May play a role in eye morphogenesis and the development of retinal ganglion cell projections to the midbrain. This is Cleavage and polyadenylation specificity factor subunit 1 (CPSF1) from Bos taurus (Bovine).